A 574-amino-acid polypeptide reads, in one-letter code: uncharacterized protein (574 aa).

The tract at residues 297 to 317 (SAASKPRKRKKDEVSGAQVNS) is disordered.

This is an uncharacterized protein from Mus musculus (Mouse).